The following is a 530-amino-acid chain: Zinc finger protein ZIC 4 (530 aa).

Basic residues-rich tracts occupy residues 31 to 40 (HHPHHHHHPP) and 97 to 113 (NPHHRHHHHHHHHHHMA). 2 disordered regions span residues 31–50 (HHPHHHHHPPHLPQSVTGYP) and 87–138 (PGAL…SYSS). The C2H2-type 1; atypical zinc-finger motif lies at 284–317 (LICKWIEEDQLPKKLCSKTFSTMHELVTHVTVEH). A C2H2-type 2; atypical zinc finger spans residues 326-353 (HICFWEECPREGKPFKAKYKLVNHIRVH). 3 consecutive C2H2-type zinc fingers follow at residues 359–383 (FPCPFPGCGKVFARSENLKIHKRTH), 389–413 (FKCEFEGCDRRFANSSDRKKHSHVH), and 419–443 (YNCKVRGCDKSYTHPSSLRKHMKVH). The interval 432 to 530 (HPSSLRKHMK…YSNWQATNTF (99 aa)) is disordered. Positions 435–444 (SLRKHMKVHC) are enriched in basic residues. 2 stretches are compositionally biased toward low complexity: residues 455–467 (SSIPSLVSPSSDS) and 474–485 (TSSQPEPPTSSQ). Positions 520–530 (SYSNWQATNTF) are enriched in polar residues.

This sequence belongs to the GLI C2H2-type zinc-finger protein family. At mid-gastrula stage (stage 11.5), weakly expressed in the prospective neural fold. Expressed in the neural plate border region at early neurula stage (stage 15) with strongest expression in the prospective regions of the hyoid and branchial crests. Expression in the dorsal central nervous system (CNS) continues through late neurula stage and early tail bud stages with expression strongest in the olfactory placode and expression levels increasing as development progresses. Becomes expressed in somites.

The protein localises to the nucleus. Its function is as follows. May bind to DNA. Induces neural and neural crest differentiation. Does not induce anterior neural tissue. In Xenopus laevis (African clawed frog), this protein is Zinc finger protein ZIC 4 (zic4).